The following is a 48-amino-acid chain: Osteocalcin (48 aa).

Residues 1–46 (SFAVGSSYGAAPDPLEAQREVCELNPDCDELADHIGFQEAYRRFYG) enclose the Gla domain. Residues Glu-16, Glu-20, Glu-23, and Asp-29 each coordinate Ca(2+). 3 positions are modified to 4-carboxyglutamate: Glu-16, Glu-20, and Glu-23. Residues Cys-22 and Cys-28 are joined by a disulfide bond.

This sequence belongs to the osteocalcin/matrix Gla protein family. Post-translationally, gamma-carboxyglutamate residues are formed by vitamin K dependent carboxylation by GGCX. These residues are essential for the binding of calcium.

The protein resides in the secreted. Its function is as follows. The carboxylated form is one of the main organic components of the bone matrix, which constitutes 1-2% of the total bone protein. The carboxylated form binds strongly to apatite and calcium. The polypeptide is Osteocalcin (BGLAP) (Dromaius novaehollandiae (Emu)).